Here is a 362-residue protein sequence, read N- to C-terminus: Glutamine synthetase (362 aa).

The GS beta-grasp domain maps to 26–107 (LIAEYIWIDS…VLSECWNADG (82 aa)). The region spanning 114 to 362 (HRHEAAKLME…METCFGAVSE (249 aa)) is the GS catalytic domain.

It belongs to the glutamine synthetase family. Homooctamer.

Its subcellular location is the cytoplasm. The catalysed reaction is L-glutamate + NH4(+) + ATP = L-glutamine + ADP + phosphate + H(+). The protein is Glutamine synthetase (gln-1) of Neurospora crassa (strain ATCC 24698 / 74-OR23-1A / CBS 708.71 / DSM 1257 / FGSC 987).